Consider the following 139-residue polypeptide: Large ribosomal subunit protein bL17 (139 aa).

Positions 120-139 (EDAKGRDSGPTQDNSEAEAA) are disordered.

In terms of assembly, part of the 50S ribosomal subunit. Contacts protein L32. In terms of processing, may be methylated thrice, on undetermined residues.

The chain is Large ribosomal subunit protein bL17 from Rhodopseudomonas palustris (strain ATCC BAA-98 / CGA009).